Consider the following 278-residue polypeptide: Formyltetrahydrofolate deformylase (278 aa).

An ACT domain is found at 6–85 (ILLTDCPDDK…RLIGTQRKRI (80 aa)). D223 is an active-site residue.

This sequence belongs to the PurU family.

It catalyses the reaction (6R)-10-formyltetrahydrofolate + H2O = (6S)-5,6,7,8-tetrahydrofolate + formate + H(+). Its pathway is purine metabolism; IMP biosynthesis via de novo pathway; formate from 10-formyl-5,6,7,8-tetrahydrofolate: step 1/1. Its function is as follows. Catalyzes the hydrolysis of 10-formyltetrahydrofolate (formyl-FH4) to formate and tetrahydrofolate (FH4). This Haemophilus influenzae (strain ATCC 51907 / DSM 11121 / KW20 / Rd) protein is Formyltetrahydrofolate deformylase.